A 336-amino-acid polypeptide reads, in one-letter code: Calcium uniporter regulatory subunit MCUb, mitochondrial (336 aa).

Residues 1-35 constitute a mitochondrion transit peptide; the sequence is MLQRGLWPWRTRLLPTPGTWRPARPWPLPPPPQVL. A coiled-coil region spans residues 179–210; that stretch reads ESQKKREHHLLEKIDHLKEQLQPLEQVKAGIE. The next 2 membrane-spanning stretches (helical) occupy residues 220-240 and 250-270; these read LLWA…WLTW and PVTY…FIVT. The stretch at 297 to 323 forms a coiled coil; the sequence is FDVQQYNKLKEDLAKAKESLKQARHSL.

The protein belongs to the MCU (TC 1.A.77) family. As to quaternary structure, homooligomer. Associates with the uniplex complex, composed of MCU, MICU1, MICU2 and EMRE/SMDT1, inhibiting its activity.

It is found in the mitochondrion inner membrane. Its function is as follows. Negative regulator of the mitochondrial calcium uniporter (MCU), a channel that mediates calcium uptake into the mitochondrial matrix. MCUB is required to limit mitochondrial calcium overload during stress. Acts as a dominant-negative regulator that displaces MCU from the functional uniplex complex and thereby decreases the association of calcium sensors MICU1 and MICU2, preventing channel gating. Mitochondrial calcium homeostasis plays key roles in mitochondrial metabolism. Acts as an important regulator of mitochondrial metabolism in response to stress in muscle cells: induced in response to fasting, leading to restrict mitochondrial calcium uptake, resulting in reprogramming of mitochondria toward fatty acid oxidation preference. Acts as a regulator of macrophage polarization during skeletal muscle regeneration: inhibition of mitochondrial calcium uptake drives differentiation of macrophages with anti-inflammatory profile, promoting the differentiation and fusion of satellite cells. The sequence is that of Calcium uniporter regulatory subunit MCUb, mitochondrial from Homo sapiens (Human).